The following is a 35-amino-acid chain: Kappa-theraphotoxin-Tb1b (35 aa).

3 disulfides stabilise this stretch: Cys-3–Cys-18, Cys-10–Cys-23, and Cys-17–Cys-30.

This sequence belongs to the neurotoxin 10 (Hwtx-1) family. 58 subfamily. In terms of assembly, monomer. Expressed by the venom gland.

It localises to the secreted. Its function is as follows. Low-affinity blocker of Kv4.2/KCND2 voltage-gated potassium channels. Is presumed to shift the voltage-dependence of channel activation to more depolarized potentials and to bind to the S3-S4 linker region of the voltage sensor domain. The protein is Kappa-theraphotoxin-Tb1b of Theraphosa blondi (Goliath birdeating spider).